Consider the following 89-residue polypeptide: Small ribosomal subunit protein uS15 (89 aa).

The protein belongs to the universal ribosomal protein uS15 family. In terms of assembly, part of the 30S ribosomal subunit. Forms a bridge to the 50S subunit in the 70S ribosome, contacting the 23S rRNA.

One of the primary rRNA binding proteins, it binds directly to 16S rRNA where it helps nucleate assembly of the platform of the 30S subunit by binding and bridging several RNA helices of the 16S rRNA. Functionally, forms an intersubunit bridge (bridge B4) with the 23S rRNA of the 50S subunit in the ribosome. This Chlorobium luteolum (strain DSM 273 / BCRC 81028 / 2530) (Pelodictyon luteolum) protein is Small ribosomal subunit protein uS15.